The sequence spans 239 residues: Dihydromethanopterin reductase (acceptor) (239 aa).

4Fe-4S ferredoxin-type domains lie at 144–175 (MPYN…EKNG) and 176–205 (VTDQ…GGPV). Residues C153, C156, C159, C165, C185, C188, C191, and C195 each coordinate [4Fe-4S] cluster.

In terms of assembly, homodimer. It depends on [4Fe-4S] cluster as a cofactor.

The enzyme catalyses 5,6,7,8-tetrahydromethanopterin + A = 7,8-dihydromethanopterin + AH2. It participates in cofactor biosynthesis; 5,6,7,8-tetrahydromethanopterin biosynthesis. Involved in the biosynthesis of tetrahydromethanopterin, a coenzyme used in methanogenesis. Catalyzes the reduction of dihydromethanopterin (H(2)MPT) to tetrahydromethanopterin (H(4)MPT). Ferredoxin may serve as an electron donor. This Methanosarcina mazei (strain ATCC BAA-159 / DSM 3647 / Goe1 / Go1 / JCM 11833 / OCM 88) (Methanosarcina frisia) protein is Dihydromethanopterin reductase (acceptor).